A 586-amino-acid polypeptide reads, in one-letter code: Lamin-B1 (586 aa).

Residues 1-31 (MATATPVPPRMGSRAGGPTTPLSPTRLSRLQ) are disordered. Position 2 is an N-acetylalanine (alanine 2). Residues 2–34 (ATATPVPPRMGSRAGGPTTPLSPTRLSRLQEKE) form a head region. Residues threonine 3 and threonine 5 each carry the phosphothreonine modification. Residue arginine 14 is modified to Omega-N-methylarginine. Threonine 20 carries the phosphothreonine modification. The residue at position 23 (serine 23) is a Phosphoserine. Threonine 25 is modified (phosphothreonine). Serine 28 carries the post-translational modification Phosphoserine. Residues 32–388 (EKEELRELND…KLLEGEEERL (357 aa)) form the IF rod domain. The coil 1A stretch occupies residues 35 to 69 (ELRELNDRLAVYIDKVRSLETENSALQLQVTEREE). The segment at 70–81 (VRGRELTGLKAL) is linker 1. A coil 1B region spans residues 82 to 215 (YETELADARR…EFRKSMYEEE (134 aa)). Residue lysine 102 forms a Glycyl lysine isopeptide (Lys-Gly) (interchain with G-Cter in SUMO2) linkage. Lysine 111 is subject to N6-acetyllysine. Lysine 123 participates in a covalent cross-link: Glycyl lysine isopeptide (Lys-Gly) (interchain with G-Cter in SUMO2). Position 126 is a phosphoserine (serine 126). Lysine 145 participates in a covalent cross-link: Glycyl lysine isopeptide (Lys-Gly) (interchain with G-Cter in SUMO2). Lysine 157 carries the post-translational modification N6-acetyllysine; alternate. Lysine 157 participates in a covalent cross-link: Glycyl lysine isopeptide (Lys-Gly) (interchain with G-Cter in SUMO2); alternate. Residue serine 158 is modified to Phosphoserine. A Glycyl lysine isopeptide (Lys-Gly) (interchain with G-Cter in SUMO2) cross-link involves residue lysine 181. Phosphoserine occurs at positions 200, 210, and 232. The interval 216–243 (INETRRKHETRLVEVDSGRQIEYEYKLA) is linker 2. Residues lysine 241 and lysine 261 each participate in a glycyl lysine isopeptide (Lys-Gly) (interchain with G-Cter in SUMO2) cross-link. The interval 244-386 (QALHEMREQH…YRKLLEGEEE (143 aa)) is coil 2. Lysine 271 carries the post-translational modification N6-acetyllysine; alternate. Lysine 271 is covalently cross-linked (Glycyl lysine isopeptide (Lys-Gly) (interchain with G-Cter in SUMO2); alternate). Phosphoserine is present on residues serine 278 and serine 302. A Glycyl lysine isopeptide (Lys-Gly) (interchain with G-Cter in SUMO2) cross-link involves residue lysine 312. Lysine 330 is modified (N6-acetyllysine; alternate). Residue lysine 330 forms a Glycyl lysine isopeptide (Lys-Gly) (interchain with G-Cter in SUMO2); alternate linkage. Residues serine 375 and serine 393 each carry the phosphoserine modification. Residues 387-586 (RLKLSPSPSS…RASNRSCAIM (200 aa)) are tail. Residues 388–432 (LKLSPSPSSRVTVSRASSSRSVRTTRGKRKRVDVEESEASSSVSI) are disordered. Low complexity predominate over residues 390–409 (LSPSPSSRVTVSRASSSRSV). Threonine 399 is a glycosylation site (O-linked (GlcNAc) threonine). At arginine 413 the chain carries Omega-N-methylarginine. The short motif at 415 to 420 (KRKRVD) is the Nuclear localization signal element. Residues 430 to 546 (VSISHSASAT…EEVAQRSTVF (117 aa)) enclose the LTD domain. Lysine 483 carries the N6-acetyllysine modification. A Glycyl lysine isopeptide (Lys-Gly) (interchain with G-Cter in SUMO2) cross-link involves residue lysine 532. Position 534 is a phosphoserine (serine 534). Lysine 547 participates in a covalent cross-link: Glycyl lysine isopeptide (Lys-Gly) (interchain with G-Cter in SUMO2). Threonine 575 is modified (phosphothreonine). Cysteine methyl ester is present on cysteine 583. The S-farnesyl cysteine moiety is linked to residue cysteine 583. Residues 584–586 (AIM) constitute a propeptide, removed in mature form.

This sequence belongs to the intermediate filament family. In terms of assembly, homodimer. Lamin dimers then assemble into dimeric head-to-tail polymers. Ultimately, two head-to-tail polymers assemble laterally into a protofilament with a uniformly shaped rod of 3.5 nm in diameter. Interacts with SPAG4 and SEPT12. B-type lamins undergo a series of modifications, such as farnesylation and phosphorylation. Increased phosphorylation of the lamins occurs before envelope disintegration and probably plays a role in regulating lamin associations. Post-translationally, phosphorylation plays a key role in lamin organization, subcellular localization and nuclear envelope disintegration. Phosphorylation by CDK1 at Ser-23 and Ser-393 at the onset of mitosis drives lamin disassembly and nuclear envelope breakdown.

The protein resides in the nucleus lamina. Functionally, lamins are intermediate filament proteins that assemble into a filamentous meshwork, and which constitute the major components of the nuclear lamina, a fibrous layer on the nucleoplasmic side of the inner nuclear membrane. Lamins provide a framework for the nuclear envelope, bridging the nuclear envelope and chromatin, thereby playing an important role in nuclear assembly, chromatin organization, nuclear membrane and telomere dynamics. The structural integrity of the lamina is strictly controlled by the cell cycle, as seen by the disintegration and formation of the nuclear envelope in prophase and telophase, respectively. The protein is Lamin-B1 (LMNB1) of Homo sapiens (Human).